The primary structure comprises 589 residues: MASKAMPRAPPAAPNLQSLKLCSQNDSSLETTSPSKRSALVPGRSAESSKPNPEVVQKEQKSTQHQNESIDLTGSNDPAEVKAEGNLVPKRLADEEKGVVEDGIANGSLKSSSALGKEHGIASASGSARLVGRSETGERGFSSSRCRPSTSSDVSDESACSSISSVTKPHKANDSRWEAIQMIRTRDGILGLSHFKLLKKLGCGDIGSVYLSELSGTKSYFAMKVMDKASLASRKKLLRAQTEKEILQCLDHPFLPTLYTHFETDKFSCLVMEFCPGGDLHTLRQRQRGKYFPEQAVKFYVAEILLAMEYLHMLGIIYRDLKPENVLVREDGHIMLSDFDLSLRCAVSPTLIRSSNPDAEALRKNNQAYCVQPACVEPSCMIQPSCATPTTCFGPRFFSKSKKDRKPKPEVVNQVSPWPELIAEPSDARSMSFVGTHEYLAPEIIKGEGHGSAVDWWTFGIFLYELLFGKTPFKGSGNRATLFNVIGQPLRFPEYPVVSFSARDLIRGLLVKEPQQRLGCKRGATEIKQHPFFEGVNWALIRCASPPEVPRPVEIERPPKQPVSTSEPAAAPSDAAQKSSDSYLEFDFF.

The segment at 1-167 (MASKAMPRAP…SACSSISSVT (167 aa)) is disordered. Composition is skewed to polar residues over residues 15-36 (NLQS…SPSK) and 63-76 (TQHQ…TGSN). The span at 91–100 (RLADEEKGVV) shows a compositional bias: basic and acidic residues. Residues 142–165 (SSSRCRPSTSSDVSDESACSSISS) show a composition bias toward low complexity. In terms of domain architecture, Protein kinase spans 195-533 (FKLLKKLGCG…ATEIKQHPFF (339 aa)). ATP-binding positions include 201–209 (LGCGDIGSV) and K224. D320 serves as the catalytic Proton acceptor. The segment at 551-589 (RPVEIERPPKQPVSTSEPAAAPSDAAQKSSDSYLEFDFF) is disordered.

This sequence belongs to the protein kinase superfamily. Ser/Thr protein kinase family.

It carries out the reaction L-seryl-[protein] + ATP = O-phospho-L-seryl-[protein] + ADP + H(+). The enzyme catalyses L-threonyl-[protein] + ATP = O-phospho-L-threonyl-[protein] + ADP + H(+). May play a role in the regulation of metabolism and signal transduction processes. The chain is Protein kinase G11A from Oryza sativa subsp. japonica (Rice).